The primary structure comprises 720 residues: Capsid protein (720 aa).

Disordered regions lie at residues 546–569 (GTQR…GPNF) and 616–691 (TEPS…RDRD). The segment covering 652–664 (PTDEDERYLEAEA) has biased composition (acidic residues).

It belongs to the anelloviridae capsid protein family.

The protein localises to the virion. In terms of biological role, self-assembles to form an icosahedral capsid with a T=1 symmetry, about 30 nm in diameter, and consisting of 60 capsid proteins. The capsid encapsulates the genomic DNA. Capsid protein is involved in attachment and entry into the host cell. The protein is Capsid protein of Torque teno douroucouli virus (isolate At-TTV3).